The sequence spans 765 residues: Probable glycosyltransferase STELLO2 (765 aa).

Topologically, residues 1-43 are cytoplasmic; that stretch reads MLVQDRVAPKPPKSRIRELPSRDRFAEPKILDFSSWVSDNVYR. The chain crosses the membrane as a helical span at residues 44–64; the sequence is IVIIFLFIVTVAAFFFLYNTT. Residues 65 to 765 lie on the Lumenal side of the membrane; it reads DTASLLCFQS…EGDPLLMELV (701 aa). N-linked (GlcNAc...) asparagine glycosylation is found at Asn-235 and Asn-723.

The protein belongs to the STELLO family. In terms of assembly, homo- and heterodimer with STL1. Interacts with CESA1, CESA3, CESA4, CESA6, CESA7 and CESA8, but not with GOT1. As to expression, expressed in cells that are expanding or producing secondary cell walls.

Its subcellular location is the golgi apparatus membrane. In terms of biological role, probable glycosyltransferase regulating the assembly and trafficking of cellulose synthase complexes. The protein is Probable glycosyltransferase STELLO2 of Arabidopsis thaliana (Mouse-ear cress).